Reading from the N-terminus, the 251-residue chain is Cholesterol 25-hydroxylase-like protein (251 aa).

Helical transmembrane passes span 22 to 42 (FFPV…FVLL), 69 to 89 (WSCL…LSVL), and 108 to 128 (VVWD…VWHL). A Fatty acid hydroxylase domain is found at 113 to 247 (AACLLLFDFQ…FTHWDKLFGT (135 aa)). Positions 126–130 (WHLLH) match the Histidine box-1 motif. Residues 141–145 (HKVHH) carry the Histidine box-2 motif. The Histidine box-3 motif lies at 222–228 (HHDVHHQ).

It belongs to the sterol desaturase family. It depends on Fe cation as a cofactor.

It is found in the endoplasmic reticulum membrane. It carries out the reaction cholesterol + AH2 + O2 = 25-hydroxycholesterol + A + H2O. The enzyme catalyses cholesterol + NADPH + O2 + H(+) = 25-hydroxycholesterol + NADP(+) + H2O. Catalyzes the formation of 25-hydroxycholesterol from cholesterol, leading to repress cholesterol biosynthetic enzymes. Plays a key role in cell positioning and movement in lymphoid tissues: 25-hydroxycholesterol is an intermediate in biosynthesis of 7-alpha,25-dihydroxycholesterol (7-alpha,25-OHC), an oxysterol that acts as a ligand for the G protein-coupled receptor GPR183/EBI2, a chemotactic receptor for a number of lymphoid cells. May play an important role in regulating lipid metabolism by synthesizing a corepressor that blocks sterol regulatory element binding protein (SREBP) processing. In testis, production of 25-hydroxycholesterol by macrophages may play a role in Leydig cell differentiation. The polypeptide is Cholesterol 25-hydroxylase-like protein (ch25h) (Danio rerio (Zebrafish)).